The primary structure comprises 90 residues: Acylphosphatase (90 aa).

The Acylphosphatase-like domain occupies Cys-5–Gly-90. Catalysis depends on residues Arg-20 and Asn-38.

The protein belongs to the acylphosphatase family.

It catalyses the reaction an acyl phosphate + H2O = a carboxylate + phosphate + H(+). This Chromohalobacter salexigens (strain ATCC BAA-138 / DSM 3043 / CIP 106854 / NCIMB 13768 / 1H11) protein is Acylphosphatase (acyP).